Consider the following 821-residue polypeptide: Condensin-2 complex subunit kle-2 (821 aa).

The interval 389–426 (VMQNDEPNTSRRPDENYAPMDFDDDFGGGGDDDDDDYI) is disordered. Residues 409–424 (DFDDDFGGGGDDDDDD) are compositionally biased toward acidic residues. A coiled-coil region spans residues 529–561 (TAILAEKKRRIKEKTAKIREARIQNMQRKRTAR).

It belongs to the CND2 H2 (condensin-2 subunit 2) family. As to quaternary structure, component of the condensin II complex, which contains the mix-1/SMC2 and smc-4/SMC4 heterodimer, and three non SMC subunits, capg-2, kle-2 and hcp-6 that probably regulate the complex. Within the complex, interacts with mix-1, smc-4, capg-2 and hcp-6.

Its subcellular location is the nucleus. It localises to the chromosome. It is found in the centromere. Functionally, regulatory subunit of the condensin II complex, a complex that seems to play a role in prophase chromosome condensation and in chromosome segregation in mitosis and in meiosis. The polypeptide is Condensin-2 complex subunit kle-2 (kle-2) (Caenorhabditis elegans).